The primary structure comprises 93 residues: UPF0175 protein AF_0100 (93 aa).

It belongs to the UPF0175 family.

The polypeptide is UPF0175 protein AF_0100 (Archaeoglobus fulgidus (strain ATCC 49558 / DSM 4304 / JCM 9628 / NBRC 100126 / VC-16)).